The following is a 250-amino-acid chain: 2,3-bisphosphoglycerate-dependent phosphoglycerate mutase (250 aa).

Substrate is bound by residues 10–17 (RHGESQWN), 23–24 (TG), arginine 62, 89–92 (ERHY), lysine 100, 116–117 (RR), and 185–186 (GN). Residue histidine 11 is the Tele-phosphohistidine intermediate of the active site. The Proton donor/acceptor role is filled by glutamate 89.

It belongs to the phosphoglycerate mutase family. BPG-dependent PGAM subfamily. Homodimer.

It carries out the reaction (2R)-2-phosphoglycerate = (2R)-3-phosphoglycerate. It functions in the pathway carbohydrate degradation; glycolysis; pyruvate from D-glyceraldehyde 3-phosphate: step 3/5. Catalyzes the interconversion of 2-phosphoglycerate and 3-phosphoglycerate. In Salmonella dublin (strain CT_02021853), this protein is 2,3-bisphosphoglycerate-dependent phosphoglycerate mutase.